Here is a 203-residue protein sequence, read N- to C-terminus: LexA repressor (203 aa).

A DNA-binding region (H-T-H motif) is located at residues 29–49; sequence VREIGQEVGLSSSSTVHGYLK. Catalysis depends on for autocatalytic cleavage activity residues Ser126 and Lys163.

The protein belongs to the peptidase S24 family. As to quaternary structure, homodimer.

The enzyme catalyses Hydrolysis of Ala-|-Gly bond in repressor LexA.. Functionally, represses a number of genes involved in the response to DNA damage (SOS response), including recA and lexA. In the presence of single-stranded DNA, RecA interacts with LexA causing an autocatalytic cleavage which disrupts the DNA-binding part of LexA, leading to derepression of the SOS regulon and eventually DNA repair. In Pelotomaculum thermopropionicum (strain DSM 13744 / JCM 10971 / SI), this protein is LexA repressor.